Consider the following 218-residue polypeptide: Cytidylate kinase (218 aa).

Glycine 21–threonine 29 is an ATP binding site.

This sequence belongs to the cytidylate kinase family. Type 1 subfamily.

It localises to the cytoplasm. It carries out the reaction CMP + ATP = CDP + ADP. It catalyses the reaction dCMP + ATP = dCDP + ADP. In Rickettsia canadensis (strain McKiel), this protein is Cytidylate kinase.